The chain runs to 617 residues: Vacuolar protein sorting-associated protein 33A (617 aa).

The segment at 268-287 is disordered; sequence NFPSDGALPGGGGSGPRVEE.

The protein belongs to the STXBP/unc-18/SEC1 family. In terms of assembly, component of the class C core vacuole/endosome tethering (CORVET) complex composed of at least Vps8, dor/Vps18, car/Vps33A and Vps16A; unlike in other species, Vps11 is not part of the Drosophila complex. Due to the reduced number of components the Drosophila CORVET complex is often referred to as the miniCORVET complex. Interacts with ema. Component of the homotypic fusion and vacuole protein sorting (HOPS) complex, composed of Vps16A, car/Vps33A, dor/Vps18, Vps39, Vps11 and lt/Vps41. The tethering complex core made up of Vps16A, car/Vps33A and dor/Vps18 and shared by both HOPS and CORVET, preferentially associates with CORVET specific Vps8 over HOPS specific lt/Vps41. Interacts with Syx17 (via SNARE domain); the interaction requires Vps16A, may involve additional components of the HOPS complex and may promote assembly of the Syx17-Snap29-Vamp7 trans-SNARE complex.

It localises to the early endosome. Its subcellular location is the late endosome membrane. The protein localises to the lysosome membrane. Its function is as follows. Core component of the class C core vacuole/endosome tethering (CORVET) and the homotypic fusion and vacuole protein sorting (HOPS) tethering complexes involved in endo-lysosomal vesicle trafficking and lysosome biogenesis. The CORVET complex facilitates docking and fusion of endosomal vesicles during endosome maturation, acts upstream of HOPS, but is not involved in autophagic flux. The CORVET complex may cooperate with the early endosomal tether Rbsn-5 to mediate endosomal fusion. The HOPS complex facilitates docking and fusion of lysosomes with late endosomes and several other types of vesicles. The HOPS complex is also involved in autophagy and crinophagy (the elimination of unused secretory granules through their fusion with lysosomes). The HOPS complex probably instigates autophagosome-lysosome fusion by binding autophagosome associated Syx17/syntaxin 17 and promoting assembly of the trans-SNARE complex. Independent of Syx17/syntaxin 17 HOPS is involved in biosynthetic transport to lysosomes and lysosome-related organelles such as eye-pigment granules. Required for endocytic degradation of boss/bride of sevenless and N/Notch in developing ommatidia. This is Vacuolar protein sorting-associated protein 33A from Drosophila melanogaster (Fruit fly).